The primary structure comprises 465 residues: GTPase Der (465 aa).

EngA-type G domains lie at 3–166 (FLVA…LNEY) and 184–358 (IHFS…ACAN). Residues 9 to 16 (GRANVGKS), 56 to 60 (DTGGI), 118 to 121 (NKVD), 190 to 197 (GRPNVGKS), 237 to 241 (DTAGV), and 302 to 305 (NKWD) each bind GTP. The KH-like domain occupies 359–443 (KKITTADATC…PIVFEFKQSE (85 aa)). Residues 446–465 (FADRKNKRSKDEGSKSKKVK) form a disordered region.

Belongs to the TRAFAC class TrmE-Era-EngA-EngB-Septin-like GTPase superfamily. EngA (Der) GTPase family. In terms of assembly, associates with the 50S ribosomal subunit.

Functionally, GTPase that plays an essential role in the late steps of ribosome biogenesis. In Francisella tularensis subsp. mediasiatica (strain FSC147), this protein is GTPase Der.